The chain runs to 300 residues: Epimerase family protein SAB0724c (300 aa).

This sequence belongs to the NAD(P)-dependent epimerase/dehydratase family. SDR39U1 subfamily.

This is Epimerase family protein SAB0724c from Staphylococcus aureus (strain bovine RF122 / ET3-1).